Here is a 466-residue protein sequence, read N- to C-terminus: Ribulose bisphosphate carboxylase (466 aa).

Asn111 serves as a coordination point for substrate. Catalysis depends on Lys166, which acts as the Proton acceptor. Substrate is bound at residue Lys168. Positions 191, 193, and 194 each coordinate Mg(2+). N6-carboxylysine is present on Lys191. His287 serves as the catalytic Proton acceptor. 3 residues coordinate substrate: Arg288, His321, and Ser368.

It belongs to the RuBisCO large chain family. Type II subfamily. Homodimer. It depends on Mg(2+) as a cofactor.

It carries out the reaction 2 (2R)-3-phosphoglycerate + 2 H(+) = D-ribulose 1,5-bisphosphate + CO2 + H2O. The catalysed reaction is D-ribulose 1,5-bisphosphate + O2 = 2-phosphoglycolate + (2R)-3-phosphoglycerate + 2 H(+). RuBisCO catalyzes two reactions: the carboxylation of D-ribulose 1,5-bisphosphate, the primary event in carbon dioxide fixation, as well as the oxidative fragmentation of the pentose substrate. Both reactions occur simultaneously and in competition at the same active site. The protein is Ribulose bisphosphate carboxylase (cbbM) of Rhodospirillum rubrum.